Here is a 129-residue protein sequence, read N- to C-terminus: Fluoride-specific ion channel FluC 1 (129 aa).

Helical transmembrane passes span 9–29 (LSVG…NLIW), 33–53 (GTLT…YFFV), 62–82 (LVTG…SFNL), and 98–118 (IYFF…MLVG). Residues G72 and T75 each contribute to the Na(+) site.

This sequence belongs to the fluoride channel Fluc/FEX (TC 1.A.43) family.

It localises to the cell membrane. It carries out the reaction fluoride(in) = fluoride(out). Na(+) is not transported, but it plays an essential structural role and its presence is essential for fluoride channel function. Its function is as follows. Fluoride-specific ion channel. Important for reducing fluoride concentration in the cell, thus reducing its toxicity. The protein is Fluoride-specific ion channel FluC 1 of Lactobacillus johnsonii (strain CNCM I-12250 / La1 / NCC 533).